The primary structure comprises 840 residues: Protein translocase subunit SecA (840 aa).

ATP contacts are provided by residues Gln87, 105 to 109 (GEGKT), and Asp494. Residues 518–537 (RRIDNQLRGRSGRQGDPGSS) form a disordered region. Zn(2+) is bound by residues Cys826, Cys828, Cys837, and Cys838.

It belongs to the SecA family. As to quaternary structure, monomer and homodimer. Part of the essential Sec protein translocation apparatus which comprises SecA, SecYEG and auxiliary proteins SecDF-YajC and YidC. Zn(2+) serves as cofactor.

It is found in the cell inner membrane. It localises to the cytoplasm. The catalysed reaction is ATP + H2O + cellular proteinSide 1 = ADP + phosphate + cellular proteinSide 2.. Functionally, part of the Sec protein translocase complex. Interacts with the SecYEG preprotein conducting channel. Has a central role in coupling the hydrolysis of ATP to the transfer of proteins into and across the cell membrane, serving as an ATP-driven molecular motor driving the stepwise translocation of polypeptide chains across the membrane. The protein is Protein translocase subunit SecA of Desulforapulum autotrophicum (strain ATCC 43914 / DSM 3382 / VKM B-1955 / HRM2) (Desulfobacterium autotrophicum).